The chain runs to 320 residues: Malate dehydrogenase (320 aa).

Residues 10–15 (GAGMIG) and Asp34 each bind NAD(+). Positions 83 and 89 each coordinate substrate. NAD(+) contacts are provided by residues Asn96 and 119–121 (ITN). Residues Asn121 and Arg152 each coordinate substrate. His176 acts as the Proton acceptor in catalysis.

Belongs to the LDH/MDH superfamily. MDH type 3 family.

It catalyses the reaction (S)-malate + NAD(+) = oxaloacetate + NADH + H(+). Its function is as follows. Catalyzes the reversible oxidation of malate to oxaloacetate. The polypeptide is Malate dehydrogenase (Caulobacter sp. (strain K31)).